The primary structure comprises 231 residues: Uroporphyrinogen-III C-methyltransferase (231 aa).

Residues Pro-10, 85 to 87 (GGD), 115 to 116 (TS), Met-166, and Ala-218 contribute to the S-adenosyl-L-homocysteine site.

This sequence belongs to the precorrin methyltransferase family. As to quaternary structure, homodimer.

It carries out the reaction uroporphyrinogen III + 2 S-adenosyl-L-methionine = precorrin-2 + 2 S-adenosyl-L-homocysteine + H(+). The catalysed reaction is uroporphyrinogen III + S-adenosyl-L-methionine = precorrin-1 + S-adenosyl-L-homocysteine + H(+). It catalyses the reaction precorrin-1 + S-adenosyl-L-methionine = precorrin-2 + S-adenosyl-L-homocysteine. It participates in cofactor biosynthesis; adenosylcobalamin biosynthesis; precorrin-2 from uroporphyrinogen III: step 1/1. Does not show substrate inhibition at uroporphyrinogen III concentrations of up to 20 uM, in contrast to SUMT from Sinorhizobium (previously believed to be P.denitrificans). In terms of biological role, catalyzes the two successive C-2 and C-7 methylation reactions involved in the conversion of uroporphyrinogen III to precorrin-2 via the intermediate formation of precorrin-1. It is a step in the biosynthesis of both cobalamin (vitamin B12) and coenzyme F430. The chain is Uroporphyrinogen-III C-methyltransferase (cobA) from Methanobacterium ivanovii.